The primary structure comprises 202 residues: Thymidylate kinase (202 aa).

Position 7–14 (7–14 (GTEGVGKT)) interacts with ATP.

It belongs to the thymidylate kinase family.

It catalyses the reaction dTMP + ATP = dTDP + ADP. Its function is as follows. Phosphorylation of dTMP to form dTDP in both de novo and salvage pathways of dTTP synthesis. The protein is Thymidylate kinase of Acinetobacter baylyi (strain ATCC 33305 / BD413 / ADP1).